Consider the following 332-residue polypeptide: UBA domain-containing protein Mud1 (332 aa).

Aspartate 127 is a catalytic residue. Residues 246–298 (GLGIEPASKASASSPNPQSGTRLGTKESVAPNNEGSSNPPSLVNPPTDPGLNS) form a disordered region. Residues 251 to 264 (PASKASASSPNPQS) are compositionally biased toward low complexity. Residues 275-286 (APNNEGSSNPPS) are compositionally biased toward polar residues. Residues 291-332 (PTDPGLNSKIAQLVSMGFDPLEAAQALDAANGDLDVAASFLL) form the UBA domain.

Belongs to the DDI1 family. Homodimer. Interacts (via UBA domain) with polyubiquitin (polyUb) chains (via Lys-48-linked polyUbs). Has weak binding affinity for monoubiquitin. According to another report, has no affinity for monoubiquitin.

The protein resides in the cytoplasm. Its subcellular location is the cell membrane. Its function is as follows. Recognizes and binds polyubiquitin chains. Acts as a linker between the 19S proteasome and polyubiquitinated proteins via UBA domain interactions with ubiquitin for their subsequent degradation. Aspartic protease. Appears to act as negative regulator of constitutive exocytosis. May act at the level of secretory vesicle docking and fusion as a competitive inhibitor of SNARE assembly. Required for S-phase checkpoint control. This is UBA domain-containing protein Mud1 from Schizosaccharomyces pombe (strain 972 / ATCC 24843) (Fission yeast).